The sequence spans 785 residues: Peptide transporter family 2 (785 aa).

9 consecutive transmembrane segments (helical) span residues 46–66 (FSFY…LNFS), 72–92 (VLFH…SILA), 99–119 (FWTI…LAFS), 134–154 (LLGL…VSAF), 167–187 (ISLF…ISMW), 208–228 (FGIP…GSFW), 303–323 (VIVM…QGST), 345–365 (MGVL…SIVY), and 382–402 (AGGG…QLFV). Residue Asn-467 is glycosylated (N-linked (GlcNAc...) asparagine). 3 helical membrane-spanning segments follow: residues 670–690 (ILWQ…FSIT), 711–731 (WLFT…LNIF), and 738–758 (MFVF…LAVF).

This sequence belongs to the major facilitator superfamily. Proton-dependent oligopeptide transporter (POT/PTR) (TC 2.A.17) family. Expressed in vulval, pharyngeal and anal muscles.

Its subcellular location is the membrane. Its function is as follows. Proton-dependent uptake of di- or tripeptides, and to a minor extent tetrapeptides. Transport is independent of sodium and chloride ions. Protein shows high affinity to peptide substrates. The sequence is that of Peptide transporter family 2 (pept-2) from Caenorhabditis elegans.